The sequence spans 123 residues: Ribosome-binding factor A (123 aa).

It belongs to the RbfA family. As to quaternary structure, monomer. Binds 30S ribosomal subunits, but not 50S ribosomal subunits or 70S ribosomes.

It localises to the cytoplasm. Functionally, one of several proteins that assist in the late maturation steps of the functional core of the 30S ribosomal subunit. Associates with free 30S ribosomal subunits (but not with 30S subunits that are part of 70S ribosomes or polysomes). Required for efficient processing of 16S rRNA. May interact with the 5'-terminal helix region of 16S rRNA. In Rickettsia bellii (strain OSU 85-389), this protein is Ribosome-binding factor A.